The sequence spans 178 residues: Putative metal-dependent hydrolase GTNG_0529 (178 aa).

His-68, His-161, and His-165 together coordinate Zn(2+).

The protein belongs to the metal hydrolase YfiT family. As to quaternary structure, homodimer. Zn(2+) is required as a cofactor.

The protein resides in the cytoplasm. In terms of biological role, possible metal-dependent hydrolase. The polypeptide is Putative metal-dependent hydrolase GTNG_0529 (Geobacillus thermodenitrificans (strain NG80-2)).